We begin with the raw amino-acid sequence, 267 residues long: Probable 6-oxopurine nucleoside phosphorylase (267 aa).

Residues S10, 50-51, and 83-84 contribute to the phosphate site; these read RH and SA. M188 serves as a coordination point for substrate. T189 provides a ligand contact to phosphate. Residue 212-214 participates in substrate binding; the sequence is NYA.

The protein belongs to the PNP/MTAP phosphorylase family. MTAP subfamily. As to quaternary structure, homohexamer. Dimer of a homotrimer.

It carries out the reaction a purine D-ribonucleoside + phosphate = a purine nucleobase + alpha-D-ribose 1-phosphate. It catalyses the reaction guanosine + phosphate = alpha-D-ribose 1-phosphate + guanine. The catalysed reaction is inosine + phosphate = alpha-D-ribose 1-phosphate + hypoxanthine. The protein operates within purine metabolism; purine nucleoside salvage. Functionally, purine nucleoside phosphorylase which is highly specific for 6-oxopurine nucleosides. Cleaves guanosine or inosine to respective bases and sugar-1-phosphate molecules. Involved in purine salvage. The chain is Probable 6-oxopurine nucleoside phosphorylase from Thermococcus kodakarensis (strain ATCC BAA-918 / JCM 12380 / KOD1) (Pyrococcus kodakaraensis (strain KOD1)).